A 225-amino-acid polypeptide reads, in one-letter code: PKHD-type hydroxylase Smal_0990 (225 aa).

Positions Lys-78–Ser-177 constitute a Fe2OG dioxygenase domain. Residues His-96, Asp-98, and His-158 each coordinate Fe cation. Residue Arg-168 coordinates 2-oxoglutarate.

The cofactor is Fe(2+). L-ascorbate is required as a cofactor.

The polypeptide is PKHD-type hydroxylase Smal_0990 (Stenotrophomonas maltophilia (strain R551-3)).